Reading from the N-terminus, the 267-residue chain is NH(3)-dependent NAD(+) synthetase (267 aa).

Position 38–45 (38–45) interacts with ATP; it reads GISGGVDS. Asp44 contributes to the Mg(2+) binding site. Arg123 contributes to the deamido-NAD(+) binding site. Thr143 is an ATP binding site. Glu148 is a binding site for Mg(2+). Residues Lys156 and Asp163 each contribute to the deamido-NAD(+) site. Residues Lys172 and Ser193 each coordinate ATP. 250–251 serves as a coordination point for deamido-NAD(+); sequence HK.

It belongs to the NAD synthetase family. Homodimer.

It carries out the reaction deamido-NAD(+) + NH4(+) + ATP = AMP + diphosphate + NAD(+) + H(+). It participates in cofactor biosynthesis; NAD(+) biosynthesis; NAD(+) from deamido-NAD(+) (ammonia route): step 1/1. In terms of biological role, catalyzes the ATP-dependent amidation of deamido-NAD to form NAD. Uses ammonia as a nitrogen source. This is NH(3)-dependent NAD(+) synthetase from Pyrobaculum aerophilum (strain ATCC 51768 / DSM 7523 / JCM 9630 / CIP 104966 / NBRC 100827 / IM2).